We begin with the raw amino-acid sequence, 2566 residues long: Zinc finger protein GLI1 (2566 aa).

Disordered stretches follow at residues 349–375, 430–508, and 985–1046; these read HHSS…SQSS, DIRR…RSTG, and KSIE…GDPD. Polar residues-rich tracts occupy residues 434–444 and 457–492; these read TLSSNGNSSHT and WSPN…YQQH. The segment covering 493–508 has biased composition (low complexity); it reads SGYTSTSGSSGNRSTG. The span at 993–1016 shows a compositional bias: polar residues; it reads WQNQNVFSSRRNSTRDPSNNNNSG. The span at 1023 to 1035 shows a compositional bias: acidic residues; sequence DEPDVDDDEELDD. A C2H2-type 1; degenerate zinc finger spans residues 1088-1110; it reads RECVRGTRPFKAQYMLVVHMRRH. 3 consecutive C2H2-type zinc fingers follow at residues 1116-1140, 1146-1171, and 1177-1202; these read HKCI…LRSH, YQCE…NRTH, and YTCK…KTVH. Disordered regions lie at residues 1254 to 1313, 1465 to 1491, 1650 to 1677, 1727 to 1791, and 2067 to 2091; these read GNSN…PRDS, LSTT…TKQK, SKNM…NQNE, AAAS…MDND, and MHFS…NRPH. Composition is skewed to low complexity over residues 1661–1677 and 1727–1743; these read NNNE…NQNE and AAAS…TTAS. The span at 1752-1769 shows a compositional bias: basic residues; sequence NHHHQKQQPKHSHQHQNR. The span at 1770–1791 shows a compositional bias: polar residues; sequence TKSINSDNNYSNQDNVSTMDND. The span at 2070–2090 shows a compositional bias: low complexity; that stretch reads SPHSYVHSSSSNSSPFNSNRP.

It belongs to the GLI C2H2-type zinc-finger protein family. As to expression, expressed in female-paired or unpaired males along the ventral surface in neurons and skin tegument cells. In virgin and mature females, expressed bilaterally along the edges of the body in neurons. In mature females, also expressed in skin tegument cells.

It is found in the nucleus. Functionally, probable transcription factor which plays an essential role in males to trigger female sexual development by inducing NRPS expression in male. NRPS produces the pheromone beta-alanyl-tryptamine (BATT), which stimulates female sexual development. The chain is Zinc finger protein GLI1 from Schistosoma mansoni (Blood fluke).